An 83-amino-acid polypeptide reads, in one-letter code: U4-theraphotoxin-Hhn1x (83 aa).

The N-terminal stretch at 1 to 20 is a signal peptide; sequence MTLIAILTCAAALVLHTTAA. Positions 21 to 46 are excised as a propeptide; that stretch reads EELEAESQLMEVGMPDTELEAVDEER. 3 disulfides stabilise this stretch: cysteine 50/cysteine 64, cysteine 54/cysteine 75, and cysteine 69/cysteine 80.

Belongs to the neurotoxin 12 (Hwtx-2) family. 02 (Hwtx-2) subfamily. Expressed by the venom gland.

The protein resides in the secreted. In terms of biological role, postsynaptic neurotoxin. This chain is U4-theraphotoxin-Hhn1x, found in Cyriopagopus hainanus (Chinese bird spider).